The following is a 262-amino-acid chain: UPF0758 protein R01728 (262 aa).

The disordered stretch occupies residues 23–44 (PEKRTRNSPATAPAPATDTHYH). The span at 31–40 (PATAPAPATD) shows a compositional bias: low complexity. The MPN domain maps to 140 to 262 (VLSSWSAVID…HVSLKGLRLF (123 aa)). Zn(2+) contacts are provided by His-211, His-213, and Asp-224. Residues 211 to 224 (HNHPSGDPTPSRAD) carry the JAMM motif motif.

The protein belongs to the UPF0758 family.

This chain is UPF0758 protein R01728, found in Rhizobium meliloti (strain 1021) (Ensifer meliloti).